Reading from the N-terminus, the 479-residue chain is MEETNVKLSVPLSEDVIKLSALDQQIMRFYAKAVFIFERDSSKTSIDIVHHLKQGLAVTLSEIPDLAATIAPVPNSHRKDLELRIGPNSGVPFKVVDQTKQESWVYGTYPDLAAKHFPTSDIPHDILFIPQPQPSADGLPAAFLQVNIIDGGVIIAISWHHSVCDARGISILIDAWARHTATSLANGKPDLPATPAEGSRDRWRLDHGLREVTIDQLPEYTIDSSAREDPSGSYLLDRENPVTVPYSVSTWYFSASSLKALRDALAQVENDESTQFTKVEAVSALVWKHMSIARQLDRSNPDGSSLFTTRLDFRARTKPPFPDTFIGNINEPTARVRLPIAEICRASTPESLTTLAEAVRAATENTTEQSMRTLIGLVNDAPAVTDVAWKYNYFPGPDLGVTDISNIDAMKKNWGAGLGTPTCVRSYSRETGLLYLFPQDDDGGFEIQVQCEVEAVERLKADETFTRYCEFKRASAYNA.

His161 serves as the catalytic Proton acceptor.

This sequence belongs to the plant acyltransferase family. Monomer.

It functions in the pathway antibiotic biosynthesis. In terms of biological role, acyltransferase; part of the gene cluster that mediates the biosynthesis of emericellamides, secondary metabolites acting as antibiotics. The biosynthesis of emericellamides initiates from the highly reducing polyketide synthase easB which catalyzes the formation of the linear polyketide chain. EasB produces several polyketides that can be further processed by the downstream enzymes. The polyketides are released from easB as linear polyketide carboxylic acids, which are converted to CoA thioesters by the acyl-CoA ligase easD. The substrates are then loaded onto the acyltransferase easC, which shuttles them to the first thiolation (T) domain of the nonribosomal peptide synthetase easA. EasA then performs condensation of the polyketides with one glycine, two alanine, one valine and one leucine residues. A last step of cyclization leads to the production of emericellamides. This is Acyltransferase easC from Emericella nidulans (strain FGSC A4 / ATCC 38163 / CBS 112.46 / NRRL 194 / M139) (Aspergillus nidulans).